Consider the following 224-residue polypeptide: 7-cyano-7-deazaguanine synthase (224 aa).

An ATP-binding site is contributed by 10-20 (LSGGLDSATVV). 4 residues coordinate Zn(2+): Cys-189, Cys-199, Cys-202, and Cys-205.

This sequence belongs to the QueC family. Requires Zn(2+) as cofactor.

It catalyses the reaction 7-carboxy-7-deazaguanine + NH4(+) + ATP = 7-cyano-7-deazaguanine + ADP + phosphate + H2O + H(+). It participates in purine metabolism; 7-cyano-7-deazaguanine biosynthesis. Catalyzes the ATP-dependent conversion of 7-carboxy-7-deazaguanine (CDG) to 7-cyano-7-deazaguanine (preQ(0)). The chain is 7-cyano-7-deazaguanine synthase from Pseudomonas putida (strain W619).